The chain runs to 655 residues: MKGVKKEGWISYKVDGLFSFLWQKRYLVLNDSYLAFYKSDKCNEEPVLSVPLTSITNVSRIQLKQNCFEILRATDQKENISPINSYFYESNSKRSIFISTRTERDLHGWLDAIFAKCPLLSGVSSPTNFTHKVHVGFDPKVGNFVGVPDSWAKLLQTSEITYDDWNRNSKAVIKALQFYEDYNGLDTMQFNDHLNTSLDLKPLKSPTRYIINKRTNSIKRSVSRTLRKGKTDSILPVYQSELKPFPRPSDDDYKFTNIEDNKVREEGRVHVSKESTADSQTKQLGKKEQKVIQSHLRRHDNNSTFRPHRLAPSAPATKNHDSKTKWHKEDLLELKNNDDSNEIIMKMKTVAIDVNPRPYFQLVEKAGQGASGAVYLSKRIKLPQENDPRFLKSHCHRVVGERVAIKQIRLSEQPKKQLIMNELLVMNDSRQENIVNFLEAYIIDDEELWVIMEYMEGGCLTDILDAVARSNTGEHSSPLNENQMAYIVKETCQGLKFLHNKKIIHRDIKSDNILLNSQGLVKITDFGFCVELTEKRSKRATMVGTPYWMAPEIVNQKGYDEKVDVWSLGIMLIEMIEGEPPYLNEDPLKALYLIANNGSPKLRHPESVSKQTKQFLDACLQVNVESRASVRKLLTFEFLSMACSPEQLKVSLKWH.

Residues 3 to 118 enclose the PH domain; it reads GVKKEGWISY…WLDAIFAKCP (116 aa). One can recognise a CRIB domain in the interval 123 to 136; the sequence is VSSPTNFTHKVHVG. 2 stretches are compositionally biased toward basic and acidic residues: residues 265–276 and 318–327; these read EEGRVHVSKEST and KNHDSKTKWH. Residues 265–327 are disordered; that stretch reads EEGRVHVSKE…KNHDSKTKWH (63 aa). One can recognise a Protein kinase domain in the interval 360–639; sequence FQLVEKAGQG…VRKLLTFEFL (280 aa). ATP is bound by residues 366–374 and Lys406; that span reads AGQGASGAV. Catalysis depends on Asp507, which acts as the Proton acceptor.

The protein belongs to the protein kinase superfamily. STE Ser/Thr protein kinase family. STE20 subfamily.

The enzyme catalyses L-seryl-[protein] + ATP = O-phospho-L-seryl-[protein] + ADP + H(+). It carries out the reaction L-threonyl-[protein] + ATP = O-phospho-L-threonyl-[protein] + ADP + H(+). In terms of biological role, may be involved in cellular signaling or cytoskeletal functions. May play a role in morphogenetic control. This is Serine/threonine-protein kinase SKM1 (SKM1) from Saccharomyces cerevisiae (strain ATCC 204508 / S288c) (Baker's yeast).